A 225-amino-acid chain; its full sequence is ATP synthase F(0) complex subunit a (225 aa).

Transmembrane regions (helical) follow at residues 10–30 (PSLLGISLLMPALLMTTILLL), 69–89 (LILISLLILLSLTNLLGLLPY), 96–116 (QLSMNMAIALPLWLVTVLIGL), 135–155 (LLIPILILIETISLLIRPIAL), 168–188 (LLIQLISIATLNLWFMMPPLS), and 194–214 (VLILLLLLEFAVAMIQAYVFV).

Belongs to the ATPase A chain family. In terms of assembly, component of the ATP synthase complex composed at least of ATP5F1A/subunit alpha, ATP5F1B/subunit beta, ATP5MC1/subunit c (homooctomer), MT-ATP6/subunit a, MT-ATP8/subunit 8, ATP5ME/subunit e, ATP5MF/subunit f, ATP5MG/subunit g, ATP5MK/subunit k, ATP5MJ/subunit j, ATP5F1C/subunit gamma, ATP5F1D/subunit delta, ATP5F1E/subunit epsilon, ATP5PF/subunit F6, ATP5PB/subunit b, ATP5PD/subunit d, ATP5PO/subunit OSCP. ATP synthase complex consists of a soluble F(1) head domain (subunits alpha(3) and beta(3)) - the catalytic core - and a membrane F(0) domain - the membrane proton channel (subunits c, a, 8, e, f, g, k and j). These two domains are linked by a central stalk (subunits gamma, delta, and epsilon) rotating inside the F1 region and a stationary peripheral stalk (subunits F6, b, d, and OSCP). Interacts with DNAJC30; interaction is direct.

The protein localises to the mitochondrion inner membrane. The enzyme catalyses H(+)(in) = H(+)(out). Its function is as follows. Subunit a, of the mitochondrial membrane ATP synthase complex (F(1)F(0) ATP synthase or Complex V) that produces ATP from ADP in the presence of a proton gradient across the membrane which is generated by electron transport complexes of the respiratory chain. ATP synthase complex consist of a soluble F(1) head domain - the catalytic core - and a membrane F(1) domain - the membrane proton channel. These two domains are linked by a central stalk rotating inside the F(1) region and a stationary peripheral stalk. During catalysis, ATP synthesis in the catalytic domain of F(1) is coupled via a rotary mechanism of the central stalk subunits to proton translocation. With the subunit c (ATP5MC1), forms the proton-conducting channel in the F(0) domain, that contains two crucial half-channels (inlet and outlet) that facilitate proton movement from the mitochondrial intermembrane space (IMS) into the matrix. Protons are taken up via the inlet half-channel and released through the outlet half-channel, following a Grotthuss mechanism. The chain is ATP synthase F(0) complex subunit a from Alligator mississippiensis (American alligator).